A 174-amino-acid chain; its full sequence is Shikimate kinase (174 aa).

ATP is bound at residue 15-20; the sequence is GTGKST. Position 19 (Ser-19) interacts with Mg(2+). Substrate-binding residues include Asp-37, Arg-61, and Gly-82. Arg-120 contributes to the ATP binding site. Position 138 (Arg-138) interacts with substrate.

Belongs to the shikimate kinase family. Monomer. Requires Mg(2+) as cofactor.

The protein localises to the cytoplasm. It catalyses the reaction shikimate + ATP = 3-phosphoshikimate + ADP + H(+). It functions in the pathway metabolic intermediate biosynthesis; chorismate biosynthesis; chorismate from D-erythrose 4-phosphate and phosphoenolpyruvate: step 5/7. Catalyzes the specific phosphorylation of the 3-hydroxyl group of shikimic acid using ATP as a cosubstrate. The sequence is that of Shikimate kinase from Staphylococcus aureus (strain MRSA252).